We begin with the raw amino-acid sequence, 354 residues long: Neuronal growth regulator 1 (354 aa).

An N-terminal signal peptide occupies residues 1–37 (MDMMLLVQGACCSNQWLAAVLLSLCCLLPSCLPAGQS). Ig-like C2-type domains lie at 38–134 (VDFP…VHLT), 139–221 (PKIY…KVVV), and 225–313 (PTIQ…LPLN). A disulfide bridge connects residues Cys-60 and Cys-118. N-linked (GlcNAc...) asparagine glycosylation is found at Asn-73 and Asn-155. Cystine bridges form between Cys-160–Cys-203 and Cys-245–Cys-297. Tyr-187 bears the Phosphotyrosine mark. Residues Asn-275, Asn-286, Asn-294, and Asn-307 are each glycosylated (N-linked (GlcNAc...) asparagine). Residue Gly-324 is the site of GPI-anchor amidated glycine attachment. The propeptide at 325 to 354 (SADVLFSCWYLVLTLSSFTSIFYLKNAILQ) is removed in mature form.

This sequence belongs to the immunoglobulin superfamily. IgLON family.

Its subcellular location is the cell membrane. Functionally, may be involved in cell-adhesion. May function as a trans-neural growth-promoting factor in regenerative axon sprouting in the mammalian brain. The polypeptide is Neuronal growth regulator 1 (NEGR1) (Pongo abelii (Sumatran orangutan)).